A 250-amino-acid chain; its full sequence is Cell division protein FtsQ (250 aa).

Topologically, residues Met-1–Ala-11 are cytoplasmic. The chain crosses the membrane as a helical span at residues Ala-12–Ile-32. At Gln-33 to Lys-250 the chain is on the periplasmic side. Positions Phe-37–Tyr-106 constitute a POTRA domain.

The protein belongs to the FtsQ/DivIB family. FtsQ subfamily. In terms of assembly, part of a complex composed of FtsB, FtsL and FtsQ.

The protein resides in the cell inner membrane. Essential cell division protein. May link together the upstream cell division proteins, which are predominantly cytoplasmic, with the downstream cell division proteins, which are predominantly periplasmic. May control correct divisome assembly. The protein is Cell division protein FtsQ of Burkholderia pseudomallei (strain K96243).